The sequence spans 875 residues: Valine--tRNA ligase (875 aa).

Residues 43–53 (PNVTGVLHMGH) carry the 'HIGH' region motif. The short motif at 534–538 (KMSKS) is the 'KMSKS' region element. Position 537 (Lys-537) interacts with ATP. Positions 805-875 (GNLINTEEEL…LKESIAALKK (71 aa)) form a coiled coil.

Belongs to the class-I aminoacyl-tRNA synthetase family. ValS type 1 subfamily. Monomer.

The protein localises to the cytoplasm. The catalysed reaction is tRNA(Val) + L-valine + ATP = L-valyl-tRNA(Val) + AMP + diphosphate. Catalyzes the attachment of valine to tRNA(Val). As ValRS can inadvertently accommodate and process structurally similar amino acids such as threonine, to avoid such errors, it has a 'posttransfer' editing activity that hydrolyzes mischarged Thr-tRNA(Val) in a tRNA-dependent manner. This chain is Valine--tRNA ligase, found in Phocaeicola vulgatus (strain ATCC 8482 / DSM 1447 / JCM 5826 / CCUG 4940 / NBRC 14291 / NCTC 11154) (Bacteroides vulgatus).